A 174-amino-acid polypeptide reads, in one-letter code: Large ribosomal subunit protein uL18 (174 aa).

It belongs to the universal ribosomal protein uL18 family. Part of the 50S ribosomal subunit. Contacts the 5S and 23S rRNAs.

This is one of the proteins that bind and probably mediate the attachment of the 5S RNA into the large ribosomal subunit, where it forms part of the central protuberance. This chain is Large ribosomal subunit protein uL18, found in Methanocorpusculum labreanum (strain ATCC 43576 / DSM 4855 / Z).